A 1026-amino-acid chain; its full sequence is Contactin-4 (1026 aa).

An N-terminal signal peptide occupies residues 1–18 (MRLPWELLVLQSFILCLA). Ig-like C2-type domains lie at 32 to 117 (PSPV…AKLQ), 122 to 207 (DNFK…KVLG), 225 to 311 (PKIE…GQLT), 316 to 400 (PNWI…AELS), 406 to 493 (PDFS…GNLV), and 497 to 586 (PTRV…DRLS). 6 disulfides stabilise this stretch: cysteine 50-cysteine 100, cysteine 144-cysteine 194, cysteine 247-cysteine 295, cysteine 337-cysteine 384, cysteine 429-cysteine 477, and cysteine 519-cysteine 576. N-linked (GlcNAc...) asparagine glycans are attached at residues asparagine 65, asparagine 90, and asparagine 191. N-linked (GlcNAc...) asparagine glycans are attached at residues asparagine 370, asparagine 375, and asparagine 466. 4 consecutive Fibronectin type-III domains span residues 599–697 (PPEA…TEEA), 702–799 (TPAN…SAEE), 804–899 (PPAS…TRKP), and 900–995 (PPSQ…ISNA). The interval 685-710 (PSRPSEKRRTEEALPEVTPANVSGGG) is disordered. The span at 687–696 (RPSEKRRTEE) shows a compositional bias: basic and acidic residues. N-linked (GlcNAc...) asparagine glycosylation is found at asparagine 705, asparagine 764, asparagine 858, asparagine 893, asparagine 911, asparagine 929, and asparagine 954. Over residues 886 to 896 (GPSSATVNVTT) the composition is skewed to polar residues. The segment at 886-907 (GPSSATVNVTTRKPPPSQPPGN) is disordered. Serine 1000 carries GPI-anchor amidated serine lipidation. A propeptide spans 1001–1026 (GASTSNACTLSAISTIMISLTARSSL) (removed in mature form).

This sequence belongs to the immunoglobulin superfamily. Contactin family. In terms of assembly, interacts with PTPRG. In terms of tissue distribution, mainly expressed in brain. Highly expressed in cerebellum and weakly expressed in corpus callosum, caudate nucleus, amygdala and spinal cord. Also expressed in testis, pancreas, thyroid, uterus, small intestine and kidney. Not expressed in skeletal muscle. Isoform 2 is weakly expressed in cerebral cortex.

The protein resides in the cell membrane. It localises to the secreted. In terms of biological role, contactins mediate cell surface interactions during nervous system development. Has some neurite outgrowth-promoting activity. May be involved in synaptogenesis. This Homo sapiens (Human) protein is Contactin-4 (CNTN4).